Reading from the N-terminus, the 427-residue chain is Methylenetetrahydrofolate--tRNA-(uracil-5-)-methyltransferase TrmFO (427 aa).

6 to 11 (GAGLAG) serves as a coordination point for FAD.

It belongs to the MnmG family. TrmFO subfamily. FAD serves as cofactor.

Its subcellular location is the cytoplasm. The enzyme catalyses uridine(54) in tRNA + (6R)-5,10-methylene-5,6,7,8-tetrahydrofolate + NADH + H(+) = 5-methyluridine(54) in tRNA + (6S)-5,6,7,8-tetrahydrofolate + NAD(+). It catalyses the reaction uridine(54) in tRNA + (6R)-5,10-methylene-5,6,7,8-tetrahydrofolate + NADPH + H(+) = 5-methyluridine(54) in tRNA + (6S)-5,6,7,8-tetrahydrofolate + NADP(+). Its function is as follows. Catalyzes the folate-dependent formation of 5-methyl-uridine at position 54 (M-5-U54) in all tRNAs. This is Methylenetetrahydrofolate--tRNA-(uracil-5-)-methyltransferase TrmFO from Acholeplasma laidlawii (strain PG-8A).